The chain runs to 218 residues: Lipoprotein-releasing system ATP-binding protein LolD (218 aa).

Positions 2–218 (IKLEGITKSF…HMVDGTIKKD (217 aa)) constitute an ABC transporter domain. 34–41 (GPSGAGKT) is an ATP binding site.

It belongs to the ABC transporter superfamily. Lipoprotein translocase (TC 3.A.1.125) family. The complex is composed of two ATP-binding proteins (LolD) and two transmembrane proteins (LolC and LolE).

The protein localises to the cell inner membrane. In terms of biological role, part of the ABC transporter complex LolCDE involved in the translocation of mature outer membrane-directed lipoproteins, from the inner membrane to the periplasmic chaperone, LolA. Responsible for the formation of the LolA-lipoprotein complex in an ATP-dependent manner. This chain is Lipoprotein-releasing system ATP-binding protein LolD, found in Bacteroides thetaiotaomicron (strain ATCC 29148 / DSM 2079 / JCM 5827 / CCUG 10774 / NCTC 10582 / VPI-5482 / E50).